Reading from the N-terminus, the 281-residue chain is 2-dehydro-3-deoxyphosphooctonate aldolase (281 aa).

The protein belongs to the KdsA family.

The protein localises to the cytoplasm. It carries out the reaction D-arabinose 5-phosphate + phosphoenolpyruvate + H2O = 3-deoxy-alpha-D-manno-2-octulosonate-8-phosphate + phosphate. The protein operates within carbohydrate biosynthesis; 3-deoxy-D-manno-octulosonate biosynthesis; 3-deoxy-D-manno-octulosonate from D-ribulose 5-phosphate: step 2/3. It functions in the pathway bacterial outer membrane biogenesis; lipopolysaccharide biosynthesis. This is 2-dehydro-3-deoxyphosphooctonate aldolase from Ectopseudomonas mendocina (strain ymp) (Pseudomonas mendocina).